A 380-amino-acid polypeptide reads, in one-letter code: Phospho-N-acetylmuramoyl-pentapeptide-transferase (380 aa).

The next 9 helical transmembrane spans lie at 25 to 45 (RAAA…PAII), 70 to 90 (TTPT…VLLW), 98 to 118 (VLLA…DDYL), 142 to 162 (VLCG…TLPG), 173 to 193 (VLVV…VTFI), 209 to 229 (GLSS…AYVL), 245 to 265 (GAGE…GFLW), 272 to 294 (QVFM…AILL), and 357 to 377 (QVVV…LSTL).

The protein belongs to the glycosyltransferase 4 family. MraY subfamily. Requires Mg(2+) as cofactor.

Its subcellular location is the cell inner membrane. It catalyses the reaction UDP-N-acetyl-alpha-D-muramoyl-L-alanyl-gamma-D-glutamyl-meso-2,6-diaminopimeloyl-D-alanyl-D-alanine + di-trans,octa-cis-undecaprenyl phosphate = di-trans,octa-cis-undecaprenyl diphospho-N-acetyl-alpha-D-muramoyl-L-alanyl-D-glutamyl-meso-2,6-diaminopimeloyl-D-alanyl-D-alanine + UMP. It functions in the pathway cell wall biogenesis; peptidoglycan biosynthesis. Its function is as follows. Catalyzes the initial step of the lipid cycle reactions in the biosynthesis of the cell wall peptidoglycan: transfers peptidoglycan precursor phospho-MurNAc-pentapeptide from UDP-MurNAc-pentapeptide onto the lipid carrier undecaprenyl phosphate, yielding undecaprenyl-pyrophosphoryl-MurNAc-pentapeptide, known as lipid I. This Gemmatimonas aurantiaca (strain DSM 14586 / JCM 11422 / NBRC 100505 / T-27) protein is Phospho-N-acetylmuramoyl-pentapeptide-transferase.